Reading from the N-terminus, the 198-residue chain is Peroxiredoxin-2 (198 aa).

The residue at position 2 (A2) is an N-acetylalanine. One can recognise a Thioredoxin domain in the interval 6–164; it reads AHIGKPAPDF…ALRLVQAFQY (159 aa). The active-site Cysteine sulfenic acid (-SOH) intermediate is the C51. A Phosphoserine modification is found at S112. At T182 the chain carries Phosphothreonine. Residue K196 is modified to N6-acetyllysine.

It belongs to the peroxiredoxin family. AhpC/Prx1 subfamily. In terms of assembly, homodimer; disulfide-linked, upon oxidation. 5 homodimers assemble to form a ring-like decamer. Interacts with TIPIN. In terms of processing, the enzyme can be inactivated by further oxidation of the cysteine sulfenic acid (C(P)-SOH) to sulphinic acid (C(P)-SO2H) instead of its condensation to a disulfide bond. It can be reactivated by forming a transient disulfide bond with sulfiredoxin SRXN1, which reduces the cysteine sulfinic acid in an ATP- and Mg-dependent manner. Acetylation increases resistance to transition to high molecular-mass complexes. Deacetylated by HDAC6 which decreases reducing activity.

The protein resides in the cytoplasm. It catalyses the reaction a hydroperoxide + [thioredoxin]-dithiol = an alcohol + [thioredoxin]-disulfide + H2O. In terms of biological role, thiol-specific peroxidase that catalyzes the reduction of hydrogen peroxide and organic hydroperoxides to water and alcohols, respectively. Plays a role in cell protection against oxidative stress by detoxifying peroxides and as sensor of hydrogen peroxide-mediated signaling events. Might participate in the signaling cascades of growth factors and tumor necrosis factor-alpha by regulating the intracellular concentrations of H(2)O(2). This Cricetulus griseus (Chinese hamster) protein is Peroxiredoxin-2 (PRDX2).